Here is a 251-residue protein sequence, read N- to C-terminus: Phosphate import ATP-binding protein PstB (251 aa).

The region spanning 5–246 (IKIRGVNFFY…PRDKRTEDYI (242 aa)) is the ABC transporter domain. Residue 37 to 44 (GPSGCGKS) coordinates ATP.

Belongs to the ABC transporter superfamily. Phosphate importer (TC 3.A.1.7) family. As to quaternary structure, the complex is composed of two ATP-binding proteins (PstB), two transmembrane proteins (PstC and PstA) and a solute-binding protein (PstS).

The protein resides in the cell membrane. The catalysed reaction is phosphate(out) + ATP + H2O = ADP + 2 phosphate(in) + H(+). Functionally, part of the ABC transporter complex PstSACB involved in phosphate import. Responsible for energy coupling to the transport system. This is Phosphate import ATP-binding protein PstB from Dehalococcoides mccartyi (strain CBDB1).